Reading from the N-terminus, the 618-residue chain is DNA mismatch repair protein MutL (618 aa).

This sequence belongs to the DNA mismatch repair MutL/HexB family.

This protein is involved in the repair of mismatches in DNA. It is required for dam-dependent methyl-directed DNA mismatch repair. May act as a 'molecular matchmaker', a protein that promotes the formation of a stable complex between two or more DNA-binding proteins in an ATP-dependent manner without itself being part of a final effector complex. This chain is DNA mismatch repair protein MutL, found in Porphyromonas gingivalis (strain ATCC 33277 / DSM 20709 / CIP 103683 / JCM 12257 / NCTC 11834 / 2561).